The primary structure comprises 832 residues: Translation initiation factor IF-2 (832 aa).

Residues 1–10 (MLMSDVEKFG) show a composition bias toward basic and acidic residues. Disordered regions lie at residues 1-87 (MLMS…SRSA), 120-148 (RDEEEVEVAPPEGESVIDEPDSVKEPAAA), and 163-201 (IAPGAAGTRPGRGGHDDKGKRYSYQGAGGKIKEKEGGGG). Residues 11–20 (GDCGSSGGSG) are compositionally biased toward gly residues. Polar residues-rich tracts occupy residues 29-42 (RASTLAKTPTSTGG) and 71-87 (SPYTSDDNRQGQISRSA). One can recognise a tr-type G domain in the interval 331–500 (PRPPVVTVMG…LLLAEMLELR (170 aa)). A G1 region spans residues 340 to 347 (GHVDHGKT). 340–347 (GHVDHGKT) serves as a coordination point for GTP. A G2 region spans residues 365–369 (GITQH). The tract at residues 386–389 (DTPG) is G3. GTP-binding positions include 386-390 (DTPGH) and 440-443 (NKID). Residues 440–443 (NKID) form a G4 region. Residues 476–478 (SAK) are G5.

It belongs to the TRAFAC class translation factor GTPase superfamily. Classic translation factor GTPase family. IF-2 subfamily.

Its subcellular location is the cytoplasm. In terms of biological role, one of the essential components for the initiation of protein synthesis. Protects formylmethionyl-tRNA from spontaneous hydrolysis and promotes its binding to the 30S ribosomal subunits. Also involved in the hydrolysis of GTP during the formation of the 70S ribosomal complex. This is Translation initiation factor IF-2 from Anaplasma marginale (strain St. Maries).